A 257-amino-acid polypeptide reads, in one-letter code: 4-chloro-allylglycine synthase (257 aa).

Glu-112, His-119, Glu-173, His-203, Glu-207, and His-210 together coordinate Fe cation.

The cofactor is Fe(2+).

The enzyme catalyses 4-chloro-L-lysine + AH2 + O2 = L-2-amino-4-chloropent-4-enoate + formaldehyde + A + NH4(+) + H2O. It participates in amino-acid metabolism. It functions in the pathway antibiotic biosynthesis. In terms of biological role, involved in the biosynthesis of terminal alkyne-containing amino acids such as L-propargylglycine (Pra) and L-beta-ethynylserine, that are produced as antibiotics by S.cattleya. Catalyzes an oxidative C-C bond cleavage in 4-chloro-L-lysine to form 4-chloro-allyl-L-glycine (also named L-2-amino-4-chloropent-4-enoate), with release of formaldehyde and ammonia. Is also able to react with L-lysine directly to produce allylglycine in vitro. This is 4-chloro-allylglycine synthase from Streptantibioticus cattleyicolor (strain ATCC 35852 / DSM 46488 / JCM 4925 / NBRC 14057 / NRRL 8057) (Streptomyces cattleya).